The following is a 555-amino-acid chain: Anaerobic magnesium-protoporphyrin IX monomethyl ester cyclase (555 aa).

Residues 9 to 143 (NYHSGGAEIA…TAVDQGRFMA (135 aa)) enclose the B12-binding domain. A Radical SAM core domain is found at 191-416 (PMNKRVAIPN…MKPDAMDRGE (226 aa)). [4Fe-4S] cluster is bound by residues Cys-205, Cys-209, and Cys-212.

Belongs to the BchE family. Requires [4Fe-4S] cluster as cofactor. Adenosylcob(III)alamin is required as a cofactor.

It catalyses the reaction Mg-protoporphyrin IX 13-monomethyl ester + 3 S-adenosyl-L-methionine + H2O = 3,8-divinyl protochlorophyllide a + 3 5'-deoxyadenosine + 3 L-methionine + 4 H(+). It participates in porphyrin-containing compound metabolism; bacteriochlorophyll biosynthesis (light-independent). Functionally, involved in the tetrapyrrole biosynthetic pathways leading to chlorophyll and bacteriochlorophyll (BChl). Catalyzes the anaerobic formation of the isocyclic ring (E-ring) in Mg-protoporphyrin monomethyl ester (MPE) to yield protochlorophyllide a (PChlide a) via a six-electron oxidation and the formation of an oxo group at position C13 using oxygen from a water molecule. This is Anaerobic magnesium-protoporphyrin IX monomethyl ester cyclase (bchE) from Rubrivivax gelatinosus (Rhodocyclus gelatinosus).